Here is a 1485-residue protein sequence, read N- to C-terminus: Chromosome partition protein MukB (1485 aa).

34–41 (GGNGAGKS) provides a ligand contact to ATP. Coiled-coil stretches lie at residues 337-480 (LNLV…QAYQ) and 509-605 (QHLA…PVWL). The flexible hinge stretch occupies residues 666–783 (PSGAEDARLI…EVPLFGRAAR (118 aa)). Coiled coils occupy residues 835–915 (EAEI…IQQH) and 977–1116 (GMLT…AKAG).

It belongs to the SMC family. MukB subfamily. Homodimerization via its hinge domain. Binds to DNA via its C-terminal region. Interacts, and probably forms a ternary complex, with MukE and MukF via its C-terminal region. The complex formation is stimulated by calcium or magnesium. Interacts with tubulin-related protein FtsZ.

Its subcellular location is the cytoplasm. It is found in the nucleoid. Its function is as follows. Plays a central role in chromosome condensation, segregation and cell cycle progression. Functions as a homodimer, which is essential for chromosome partition. Involved in negative DNA supercoiling in vivo, and by this means organize and compact chromosomes. May achieve or facilitate chromosome segregation by condensation DNA from both sides of a centrally located replisome during cell division. The protein is Chromosome partition protein MukB of Yersinia pseudotuberculosis serotype O:3 (strain YPIII).